The sequence spans 764 residues: MYTGATTYVVGFPRIGEQRELKKVLERYWDQKTSFSEIDEIAKNLRRRHWLYQKEAGISFISSNDFSLYDNMLDTAIMLNAVPERFSNIHDKQELYFAMARGTNNTVAMEMTKWFNTNYHYIVPELSDTMNFSLCADKIINEYREAKEYGLRTKINLIGPITFLSLSKPVDGNQDTLELLPKILPCYVSLLKKIADLDDEVYIQFDEPIVVKDIDRRTLNLFYLCYKELSNVSNRLRLIVMTYFDHAVEAVKILSDIPIYGIGLDFVYGQENLKVLDSLNGKKLIAGVIDGRNIWKNNYHNTLTLLKDIEKNVKKEDIILSTTCSLLHVPYSLKHENHLDKDIKSWMSFAREKLDELSDLAKLFFVENNSEDILTILENNQRIFREKQQSSKVIDPIVRERVGNIKRRERDGSFNDRNEAQRKKLDLPLLPTTTIGSFPQTEEIRKLRRDFKNNVISQIEYDTGIKNYIDSCIQFQEDIGLDVLVHGEPERNDMVEYFGERLSGFVFTQNGWVQSYGSRCVKPTVIFGDVSRPKPMTIDTILYAKSKTNKIVKGMLTGPVTILNWSYCRSDMERSAVCEQIALAIRDEINDLQKAGIKIIQVDEAAFKEGYPLRKEKVAYYENWAVKSFKLAVSSAAIETQIHTHMCYSDFNDIIHTIEKMDADVITIETSRSGNKLLTVFATRGYKNEIGPGIYDIHSPRVPSVEELEEKIRNLMLVLPPSKLWINPDCGLKTRKWDEIRWSLSNMVKAAQHIRLGLQRVMFV.

5-methyltetrahydropteroyltri-L-glutamate is bound by residues 19–22 and Lys-113; that span reads RELK. Residues 435–437 and Glu-488 contribute to the L-homocysteine site; that span reads IGS. L-methionine-binding positions include 435–437 and Glu-488; that span reads IGS. 5-methyltetrahydropteroyltri-L-glutamate is bound by residues 519 to 520 and Trp-565; that span reads RC. Asp-603 provides a ligand contact to L-homocysteine. An L-methionine-binding site is contributed by Asp-603. Glu-609 contacts 5-methyltetrahydropteroyltri-L-glutamate. 3 residues coordinate Zn(2+): His-645, Cys-647, and Glu-669. Catalysis depends on His-698, which acts as the Proton donor. Cys-730 lines the Zn(2+) pocket.

This sequence belongs to the vitamin-B12 independent methionine synthase family. Zn(2+) serves as cofactor.

It carries out the reaction 5-methyltetrahydropteroyltri-L-glutamate + L-homocysteine = tetrahydropteroyltri-L-glutamate + L-methionine. It functions in the pathway amino-acid biosynthesis; L-methionine biosynthesis via de novo pathway; L-methionine from L-homocysteine (MetE route): step 1/1. Functionally, catalyzes the transfer of a methyl group from 5-methyltetrahydrofolate to homocysteine resulting in methionine formation. The polypeptide is 5-methyltetrahydropteroyltriglutamate--homocysteine methyltransferase (Desulforamulus reducens (strain ATCC BAA-1160 / DSM 100696 / MI-1) (Desulfotomaculum reducens)).